The sequence spans 348 residues: Alanine racemase (348 aa).

Lysine 34 functions as the Proton acceptor; specific for D-alanine in the catalytic mechanism. Lysine 34 bears the N6-(pyridoxal phosphate)lysine mark. Arginine 127 serves as a coordination point for substrate. Tyrosine 243 serves as the catalytic Proton acceptor; specific for L-alanine. Substrate is bound at residue methionine 291.

The protein belongs to the alanine racemase family. The cofactor is pyridoxal 5'-phosphate.

It catalyses the reaction L-alanine = D-alanine. It functions in the pathway amino-acid biosynthesis; D-alanine biosynthesis; D-alanine from L-alanine: step 1/1. In terms of biological role, catalyzes the interconversion of L-alanine and D-alanine. May also act on other amino acids. The polypeptide is Alanine racemase (alr) (Coprothermobacter proteolyticus (strain ATCC 35245 / DSM 5265 / OCM 4 / BT)).